A 243-amino-acid chain; its full sequence is NAD-dependent protein deacetylase (243 aa).

In terms of domain architecture, Deacetylase sirtuin-type spans 1-243; it reads MKHDLETLKH…VSVVKSLMTE (243 aa). NAD(+)-binding residues include alanine 24, phenylalanine 35, arginine 36, glutamine 105, isoleucine 107, aspartate 108, and histidine 123. Phenylalanine 35 provides a ligand contact to nicotinamide. Residues isoleucine 107 and aspartate 108 each contribute to the nicotinamide site. The active-site Proton acceptor is histidine 123. 4 residues coordinate Zn(2+): cysteine 131, cysteine 134, cysteine 151, and cysteine 154. NAD(+) contacts are provided by serine 192, serine 193, asparagine 215, and aspartate 232.

Belongs to the sirtuin family. Class U subfamily. Requires Zn(2+) as cofactor.

It localises to the cytoplasm. The catalysed reaction is N(6)-acetyl-L-lysyl-[protein] + NAD(+) + H2O = 2''-O-acetyl-ADP-D-ribose + nicotinamide + L-lysyl-[protein]. In terms of biological role, NAD-dependent protein deacetylase which modulates the activities of several enzymes which are inactive in their acetylated form. This chain is NAD-dependent protein deacetylase, found in Staphylococcus aureus (strain COL).